The following is a 648-amino-acid chain: Serine/threonine-protein kinase plk-1 (648 aa).

Residues 1 to 24 form a disordered region; it reads MNRLPNIAKPPQKSNQRKEKAPPE. Residues 38 to 289 enclose the Protein kinase domain; the sequence is YEKGRFLGKG…AKQVQRDGFF (252 aa). ATP-binding positions include 44 to 52 and Lys-67; that span reads LGKGGFAHC. Asp-161 functions as the Proton acceptor in the catalytic mechanism. POLO box domains follow at residues 412 to 492 and 514 to 596; these read WISK…YMND and TLRV…RLMS. Over residues 612–629 the composition is skewed to low complexity; the sequence is PRSMAAARSASAGSRGPN.

The protein belongs to the protein kinase superfamily. Ser/Thr protein kinase family. CDC5/Polo subfamily. In terms of assembly, interacts with mex-5, mex-6 and spat-1. In terms of tissue distribution, embryos.

It is found in the cytoplasm. Its subcellular location is the cytoskeleton. The protein resides in the microtubule organizing center. It localises to the centrosome. The protein localises to the midbody. It is found in the nucleus. Its subcellular location is the chromosome. The protein resides in the centromere. It localises to the kinetochore. The enzyme catalyses L-seryl-[protein] + ATP = O-phospho-L-seryl-[protein] + ADP + H(+). It catalyses the reaction L-threonyl-[protein] + ATP = O-phospho-L-threonyl-[protein] + ADP + H(+). Its function is as follows. Required for oocyte nuclear envelope breakdown before entry of oocyte into spermatheca. In meiotic cells, required for spindle dynamics and probably for spindle attachment to the chromosomes. Zygotic role in the development of the germline and nerve cord. In mitotic cells, plays a role in spindle organization and centrosome maturation. Involved in asymmetric nuclear localization of cdc-25.1 during embryogenesis which affects cell division timing. Together with plk-2, regulates cytoplasm polarity in early embryos. May play a minor role in chromosome pairing and synapsis during oocyte meiosis I. This chain is Serine/threonine-protein kinase plk-1 (plk-1), found in Caenorhabditis elegans.